The sequence spans 783 residues: Tricorn protease-interacting factor F2 (783 aa).

Residues Glu-107 and 236 to 240 each bind substrate; that span reads GAMEN. His-271 contributes to the Zn(2+) binding site. Glu-272 acts as the Proton acceptor in catalysis. Positions 275 and 294 each coordinate Zn(2+).

This sequence belongs to the peptidase M1 family. In terms of assembly, monomer. Part of the Tricorn proteolytic complex. Zn(2+) serves as cofactor.

The protein resides in the cytoplasm. Proteases F1, F2 and F3 degrade oligopeptides produced by Tricorn (themselves probably produced by the proteasome), yielding free amino acids. This chain is Tricorn protease-interacting factor F2 (trf2), found in Thermoplasma acidophilum (strain ATCC 25905 / DSM 1728 / JCM 9062 / NBRC 15155 / AMRC-C165).